The following is a 279-amino-acid chain: Phosphatidylglycerol--prolipoprotein diacylglyceryl transferase (279 aa).

A run of 3 helical transmembrane segments spans residues 18–38, 55–75, and 89–109; these read LSVRWYGIIIAVGILLGYFVA, IIFYSALFGFIAARIYFVIFQ, and IWHGGIAIHGGLIGGFIAGVI. Arg-137 is an a 1,2-diacyl-sn-glycero-3-phospho-(1'-sn-glycerol) binding site. The next 2 helical transmembrane spans lie at 203-223 and 235-255; these read LGETFFLYLTWYSIGRFFIEG and IRVAQLVSILLILISISLIVY.

It belongs to the Lgt family.

It localises to the cell membrane. The enzyme catalyses L-cysteinyl-[prolipoprotein] + a 1,2-diacyl-sn-glycero-3-phospho-(1'-sn-glycerol) = an S-1,2-diacyl-sn-glyceryl-L-cysteinyl-[prolipoprotein] + sn-glycerol 1-phosphate + H(+). It functions in the pathway protein modification; lipoprotein biosynthesis (diacylglyceryl transfer). Functionally, catalyzes the transfer of the diacylglyceryl group from phosphatidylglycerol to the sulfhydryl group of the N-terminal cysteine of a prolipoprotein, the first step in the formation of mature lipoproteins. The sequence is that of Phosphatidylglycerol--prolipoprotein diacylglyceryl transferase from Staphylococcus aureus (strain Mu3 / ATCC 700698).